A 326-amino-acid polypeptide reads, in one-letter code: MDCQEKLEVPVYTDVDKETFLRDIYPQRRPAVLKRVPIGPCVRTWTVCFLAEKGGDREVKVHVSPEPRMDFLHKNFVYRTLPFDEFIKRAAEAKHPEFFISEDESYYLRSLGEDARKEPADLRKQFPELAEDFHVPQFFEPEQFFSSVFRISSPGLQLWTHYDVMDNLLAQVTGKKRVVLYSPEDALHLYLTGDKSEVLDIDSPDLQLYPEFVKARRYECILEPGDLLFIPALWFHNTLALQFGVGVNVFWRHLPSESYDKKDPYGNKDPVAATRALQSLERTLGILDELPPDYRDFYARRMVLRIQSRAYIRKPINAAQENSDTT.

Positions 106 to 268 constitute a JmjC domain; it reads YYLRSLGEDA…YDKKDPYGNK (163 aa). Residue Tyr107 participates in 2-oxoglutarate binding. Fe cation is bound by residues His161 and Asp163. Asn167 and Lys176 together coordinate 2-oxoglutarate. His236 contacts Fe cation.

It belongs to the TYW5 family. As to quaternary structure, homodimer. The cofactor is Fe(2+).

The enzyme catalyses 7-[(3S)-3-amino-3-carboxypropyl]wyosine(37) in tRNA(Phe) + 2-oxoglutarate + O2 = 7-(2-hydroxy-3-amino-3-carboxypropyl)wyosine(37) in tRNA(Phe) + succinate + CO2. The protein operates within tRNA modification; wybutosine-tRNA(Phe) biosynthesis. Its function is as follows. tRNA hydroxylase that acts as a component of the wybutosine biosynthesis pathway. Wybutosine is a hyper modified guanosine with a tricyclic base found at the 3'-position adjacent to the anticodon of eukaryotic phenylalanine tRNA. Catalyzes the hydroxylation of 7-(a-amino-a-carboxypropyl)wyosine (yW-72) into undermodified hydroxywybutosine (OHyW*). OHyW* being further transformed into hydroxywybutosine (OHyW) by LCMT2/TYW4. OHyW is a derivative of wybutosine found in higher eukaryotes. The chain is tRNA wybutosine-synthesizing protein 5 (tyw5) from Danio rerio (Zebrafish).